Here is a 415-residue protein sequence, read N- to C-terminus: Multidrug resistance protein MdtA (415 aa).

The signal sequence occupies residues 1–21; sequence MKSTVKKRGWVIAGIVVVALA. Residues 387–415 form a disordered region; that stretch reads AQTAADAAKPERGERAPTDSARAAKGARS. A compositionally biased stretch (basic and acidic residues) spans 394 to 403; that stretch reads AKPERGERAP.

Belongs to the membrane fusion protein (MFP) (TC 8.A.1) family. Part of a tripartite efflux system composed of MdtA, MdtB and MdtC.

Its subcellular location is the cell inner membrane. In Cronobacter turicensis (strain DSM 18703 / CCUG 55852 / LMG 23827 / z3032), this protein is Multidrug resistance protein MdtA.